We begin with the raw amino-acid sequence, 627 residues long: MNLIDYEKQYDVIVAGAGHAGCEAALAAARMGCETLLLTINLDAIALMSCNPAIGGLAKGHLVKEIDALGGEMGKNIDATGIQYRILNTRKGPAVRASRAQADKQLYRLRMKHVMEEQEHLSLKQGEVTGLVVEDGRVRGVVTKVGVRFLGKTVILTTGTFMRGLIHVGLTNYPGGRAGDLPSVGLSDQLRDLGFTVGRLKTGTPARLDGNTIDFSRLEPQYGDDPPVPFSFSTERIDRPQLPCYIAYTNERTHEIIRSGLDRSPLYSGVIEGVGPRYCPSIEDKVMRFPDKDRHQSFLEPEGRDTVEYYPSGLSTSLPIDIQYRLYRSIEGLENVEIMRPAYAIEYDYVDPIQLHTSLETKLIRNLYHAGQINGTSGYEEAAGQGLMAGINAALRVQGEEPLVLGRDEAYIGVMIDDLVTLGTREPYRMFTSRAEYRLLLREDNADLRLRERGHAVGLVRDEEYRLFLEKRERIGAELERLRTAKLLPSEADPSFLETYGMTDLRNALTFEQLLRRPDITYEELSQIDPVAGMVPPSVKEQVEIQIKYQGYIERQLDQVARARKLEGTRIPDDLDYTVIPGLSAEVREKLLRFLPDTLGQASRIQGVTPAAVGILSVAIKSRSASS.

Residues 16 to 21 (GAGHAG), Val128, and Ser183 each bind FAD. 275 to 289 (GPRYCPSIEDKVMRF) serves as a coordination point for NAD(+). Gln372 provides a ligand contact to FAD.

The protein belongs to the MnmG family. As to quaternary structure, homodimer. Heterotetramer of two MnmE and two MnmG subunits. FAD is required as a cofactor.

It is found in the cytoplasm. In terms of biological role, NAD-binding protein involved in the addition of a carboxymethylaminomethyl (cmnm) group at the wobble position (U34) of certain tRNAs, forming tRNA-cmnm(5)s(2)U34. The chain is tRNA uridine 5-carboxymethylaminomethyl modification enzyme MnmG from Geobacter sulfurreducens (strain ATCC 51573 / DSM 12127 / PCA).